Here is a 477-residue protein sequence, read N- to C-terminus: MTRFLLIIILGFLLTACQQVTVDEPEFVPHQLTELRVGTLYGPQIYMTSGQGNSGFDYDMALRFAEYLNVPLKMVPYTNRSELYDALKKNDIDIIAAGMTETPARREQFRLGPPLYRVNQVLVYREGVAAPKDISKLKGRITIIADSAFVETLTQLQKHHPSLVWDQVTDKDSEELLAMIANKEIDYTIADSSSVQINRRYLPDLRSGPVLEEKLDVVWLLPPTHSDALMSQLLAFWHQEKLAGTLDHLNEKYFGHVKRFDYIDTRAFLRAIETVLPRYRQLFETHAGDLDWRKLAATSYQESHWNPHARSPTGVRGMMMLTEPTAKEIGITNRLDAEESIRGGAAYLRDMINRLPESIPESQRMWFALASYNIGYAHVEDARKLAESMELNPNAWRDLKKVLPLLQKRKYYQKTRYGYARGSEAVHYVDSIRRYYDTLVWVDNQSKQPMPEDEQNDLIAEELPSMPAGSLSPDQPK.

Residues 1–22 (MTRFLLIIILGFLLTACQQVTV) form the signal peptide. The segment at 23–257 (DEPEFVPHQL…HLNEKYFGHV (235 aa)) is non-LT domain. An LT domain region spans residues 258 to 477 (KRFDYIDTRA…AGSLSPDQPK (220 aa)). The active site involves E302. The disordered stretch occupies residues 446 to 477 (SKQPMPEDEQNDLIAEELPSMPAGSLSPDQPK). A compositionally biased stretch (acidic residues) spans 451 to 460 (PEDEQNDLIA).

It in the N-terminal section; belongs to the bacterial solute-binding protein 3 family. The protein in the C-terminal section; belongs to the transglycosylase Slt family.

The protein localises to the cell outer membrane. It carries out the reaction Exolytic cleavage of the (1-&gt;4)-beta-glycosidic linkage between N-acetylmuramic acid (MurNAc) and N-acetylglucosamine (GlcNAc) residues in peptidoglycan, from either the reducing or the non-reducing ends of the peptidoglycan chains, with concomitant formation of a 1,6-anhydrobond in the MurNAc residue.. Functionally, murein-degrading enzyme that degrades murein glycan strands and insoluble, high-molecular weight murein sacculi, with the concomitant formation of a 1,6-anhydromuramoyl product. Lytic transglycosylases (LTs) play an integral role in the metabolism of the peptidoglycan (PG) sacculus. Their lytic action creates space within the PG sacculus to allow for its expansion as well as for the insertion of various structures such as secretion systems and flagella. The chain is Membrane-bound lytic murein transglycosylase F from Shewanella sp. (strain W3-18-1).